Here is a 942-residue protein sequence, read N- to C-terminus: Protein NLP1 (942 aa).

Pro residues predominate over residues Met1–Pro11. Disordered regions lie at residues Met1–Ala32, Thr77–Ala106, Val594–Glu620, Phe723–Ser753, and Ser759–Leu778. Residues Met21–Ala32 show a composition bias toward gly residues. The segment covering Asn597 to Asp609 has biased composition (polar residues). An RWP-RK domain is found at Asp609–Thr690. A compositionally biased stretch (low complexity) spans Ser743–Ser753. Residues Val765–Ser774 show a composition bias toward polar residues. The region spanning Ser844–Ser927 is the PB1 domain.

The protein resides in the nucleus. Functionally, probable transcription factor. This is Protein NLP1 (NLP1) from Oryza sativa subsp. japonica (Rice).